The primary structure comprises 447 residues: Phosphoglucosamine mutase (447 aa).

Ser102 serves as the catalytic Phosphoserine intermediate. Residues Ser102, Asp241, Asp243, and Asp245 each coordinate Mg(2+). Residue Ser102 is modified to Phosphoserine.

The protein belongs to the phosphohexose mutase family. The cofactor is Mg(2+). In terms of processing, activated by phosphorylation.

It catalyses the reaction alpha-D-glucosamine 1-phosphate = D-glucosamine 6-phosphate. Its function is as follows. Catalyzes the conversion of glucosamine-6-phosphate to glucosamine-1-phosphate. The polypeptide is Phosphoglucosamine mutase (Symbiobacterium thermophilum (strain DSM 24528 / JCM 14929 / IAM 14863 / T)).